Consider the following 117-residue polypeptide: Putative pterin-4-alpha-carbinolamine dehydratase (117 aa).

It belongs to the pterin-4-alpha-carbinolamine dehydratase family.

It carries out the reaction (4aS,6R)-4a-hydroxy-L-erythro-5,6,7,8-tetrahydrobiopterin = (6R)-L-erythro-6,7-dihydrobiopterin + H2O. The chain is Putative pterin-4-alpha-carbinolamine dehydratase from Aeromonas salmonicida (strain A449).